The primary structure comprises 891 residues: DNA mismatch repair protein MutS (891 aa).

Residue 632–639 (GPNMAGKS) coordinates ATP.

Belongs to the DNA mismatch repair MutS family.

In terms of biological role, this protein is involved in the repair of mismatches in DNA. It is possible that it carries out the mismatch recognition step. This protein has a weak ATPase activity. The chain is DNA mismatch repair protein MutS from Rhodopirellula baltica (strain DSM 10527 / NCIMB 13988 / SH1).